We begin with the raw amino-acid sequence, 90 residues long: Small ribosomal subunit protein bS16 (90 aa).

The protein belongs to the bacterial ribosomal protein bS16 family.

The sequence is that of Small ribosomal subunit protein bS16 from Bacillus velezensis (strain DSM 23117 / BGSC 10A6 / LMG 26770 / FZB42) (Bacillus amyloliquefaciens subsp. plantarum).